The chain runs to 438 residues: Serine--tRNA ligase (438 aa).

245–247 (TAE) contacts L-serine. 276-278 (RSE) provides a ligand contact to ATP. L-serine is bound at residue Glu299. Residue 363–366 (EISS) coordinates ATP. Ser398 contacts L-serine.

The protein belongs to the class-II aminoacyl-tRNA synthetase family. Type-1 seryl-tRNA synthetase subfamily. Homodimer. The tRNA molecule binds across the dimer.

Its subcellular location is the cytoplasm. The enzyme catalyses tRNA(Ser) + L-serine + ATP = L-seryl-tRNA(Ser) + AMP + diphosphate + H(+). It carries out the reaction tRNA(Sec) + L-serine + ATP = L-seryl-tRNA(Sec) + AMP + diphosphate + H(+). It participates in aminoacyl-tRNA biosynthesis; selenocysteinyl-tRNA(Sec) biosynthesis; L-seryl-tRNA(Sec) from L-serine and tRNA(Sec): step 1/1. Its function is as follows. Catalyzes the attachment of serine to tRNA(Ser). Is also able to aminoacylate tRNA(Sec) with serine, to form the misacylated tRNA L-seryl-tRNA(Sec), which will be further converted into selenocysteinyl-tRNA(Sec). This is Serine--tRNA ligase from Delftia acidovorans (strain DSM 14801 / SPH-1).